A 595-amino-acid chain; its full sequence is Merlin (595 aa).

Position 13 is a phosphoserine (serine 13). One can recognise an FERM domain in the interval 22–311 (FTVRIVTMDA…GNHDLFMRRR (290 aa)). Serine 518 is modified (phosphoserine; by PAK).

As to quaternary structure, interacts with NHERF1, HGS and AGAP2. Interacts with LAYN. Interacts with SGSM3. Interacts (via FERM domain) with MPP1. Interacts with WWC1. Interacts with the CUL4A-RBX1-DDB1-VprBP/DCAF1 E3 ubiquitin-protein ligase complex. The unphosphorylated form interacts (via FERM domain) with VPRBP/DCAF1. Interacts (via FERM domain) with NOP53; the interaction is direct. Interacts with SCHIP1; the interaction is direct. Post-translationally, phosphorylation of Ser-518 inhibits nuclear localization by disrupting the intramolecular association of the FERM domain with the C-terminal tail. The dephosphorylation of Ser-518 favors the interaction with NOP53. In terms of processing, ubiquitinated by the CUL4A-RBX1-DDB1-DCAF1/VprBP E3 ubiquitin-protein ligase complex for ubiquitination and subsequent proteasome-dependent degradation. Widely expressed. Isoform 1 and isoform 3 are predominant. Isoform 4, isoform 5 and isoform 6 are expressed moderately. Isoform 8 is found at low frequency. Isoform 7, isoform 9 and isoform 10 are not expressed in adult tissues, with the exception of adult retina expressing isoform 10. Isoform 9 is faintly expressed in fetal brain, heart, lung, skeletal muscle and spleen. Fetal thymus expresses isoforms 1, 7, 9 and 10 at similar levels.

It localises to the cell projection. Its subcellular location is the filopodium membrane. The protein resides in the ruffle membrane. The protein localises to the nucleus. It is found in the cytoplasm. It localises to the perinuclear region. Its subcellular location is the cytoplasmic granule. The protein resides in the cytoskeleton. Probable regulator of the Hippo/SWH (Sav/Wts/Hpo) signaling pathway, a signaling pathway that plays a pivotal role in tumor suppression by restricting proliferation and promoting apoptosis. Along with WWC1 can synergistically induce the phosphorylation of LATS1 and LATS2 and can probably function in the regulation of the Hippo/SWH (Sav/Wts/Hpo) signaling pathway. May act as a membrane stabilizing protein. May inhibit PI3 kinase by binding to AGAP2 and impairing its stimulating activity. Suppresses cell proliferation and tumorigenesis by inhibiting the CUL4A-RBX1-DDB1-VprBP/DCAF1 E3 ubiquitin-protein ligase complex. In Homo sapiens (Human), this protein is Merlin (NF2).